Here is a 102-residue protein sequence, read N- to C-terminus: Large ribosomal subunit protein bL21 (102 aa).

Belongs to the bacterial ribosomal protein bL21 family. As to quaternary structure, part of the 50S ribosomal subunit. Contacts protein L20.

In terms of biological role, this protein binds to 23S rRNA in the presence of protein L20. The sequence is that of Large ribosomal subunit protein bL21 from Phytoplasma australiense.